A 245-amino-acid chain; its full sequence is tRNA pseudouridine synthase A 2 (245 aa).

Residue Asp53 is the Nucleophile of the active site. Tyr111 lines the substrate pocket.

Belongs to the tRNA pseudouridine synthase TruA family. Homodimer.

The enzyme catalyses uridine(38/39/40) in tRNA = pseudouridine(38/39/40) in tRNA. Functionally, formation of pseudouridine at positions 38, 39 and 40 in the anticodon stem and loop of transfer RNAs. The protein is tRNA pseudouridine synthase A 2 of Bacillus thuringiensis subsp. konkukian (strain 97-27).